Consider the following 492-residue polypeptide: Pre-mRNA-splicing factor sap61 (492 aa).

The C2H2-type zinc finger occupies 243 to 267 (FYCEVCQKFFGKITVFEAHKKSKAH). 2 disordered regions span residues 268-291 (NKAV…KQKG) and 337-365 (AAER…QDDE). A compositionally biased stretch (low complexity) spans 276 to 286 (SSSPSTTSNTN). Positions 345-354 (QSTPSVSVEG) are enriched in polar residues. A compositionally biased stretch (acidic residues) spans 355-365 (NQDEESDQDDE). Ser360 is modified (phosphoserine). The Matrin-type zinc-finger motif lies at 397-428 (FPCEICGNYVYMGRKAFDKHFTEQRHIYGLKC).

This sequence belongs to the SF3A3 family. Belongs to the 40S cdc5-associated complex (or cwf complex), a spliceosome sub-complex reminiscent of a late-stage spliceosome composed of the U2, U5 and U6 snRNAs and at least brr2, cdc5, cwf2/prp3, cwf3/syf1, cwf4/syf3, cwf5/ecm2, spp42/cwf6, cwf7/spf27, cwf8, cwf9, cwf10, cwf11, cwf12, prp45/cwf13, cwf14, cwf15, cwf16, cwf17, cwf18, cwf19, cwf20, cwf21, cwf22, cwf23, cwf24, cwf25, cwf26, cyp7/cwf27, cwf28, cwf29/ist3, lea1, msl1, prp5/cwf1, prp10, prp12/sap130, prp17, prp22, sap61, sap62, sap114, sap145, slu7, smb1, smd1, smd3, smf1, smg1 and syf2.

It localises to the nucleus. It is found in the cytoplasm. Functionally, involved in mRNA splicing where it associates with cdc5 and the other cwf proteins as part of the spliceosome. The protein is Pre-mRNA-splicing factor sap61 (sap61) of Schizosaccharomyces pombe (strain 972 / ATCC 24843) (Fission yeast).